The sequence spans 1077 residues: FKBP12-associated protein 1 homolog (1077 aa).

A disordered region spans residues 1–173 (METSKNPSDL…MPKNSKEIKK (173 aa)). Residues 15–29 (ANVKKNRRRFQKSQK) are compositionally biased toward basic residues. Phosphoserine is present on S33. A compositionally biased stretch (basic and acidic residues) spans 52-64 (EEVKTSLKEDSSK). The span at 76–87 (PTSSVQLNVSKN) shows a compositional bias: polar residues. A compositionally biased stretch (basic and acidic residues) spans 100–116 (SSKDEELRKHAKGEGKR). Residues 136–149 (SSNSSQETSSSKGS) show a composition bias toward low complexity. Over residues 153-173 (KSERSREAKSRMPKNSKEIKK) the composition is skewed to basic and acidic residues. The RING-type; atypical zinc finger occupies 197–247 (CSVCTDTINPSTSIWSCGTCYHVFHLSCIRKWCKNSIEQRNEDAWRCPYCQ). 8 consecutive NF-X1-type zinc fingers follow at residues 290–308 (CEHPCPLLCHPGPCPPCTA), 348–367 (CGEHTCKKRCHSGLCGACFE), 420–441 (CGLHKCSKTCHPISETRAHCPF), 485–503 (CGHRCKYKCHLGSCGTCSE), 541–558 (CGRHQCNKKCCSGYSKAQ), 595–614 (CGNHFCQHMCHRGPCPRCLE), 708–729 (CKTHFCEKLCHPDGECESSCKK), and 738–760 (CEHVCQSPCHAGHPCDERIPCKA). The R3H domain occupies 835–897 (SDFADEVESL…KRNVMVYNKG (63 aa)).

This sequence belongs to the NFX1 family.

It is found in the cytoplasm. It localises to the golgi apparatus. The protein resides in the nucleus. May play a role in transcription regulation. This chain is FKBP12-associated protein 1 homolog (fap1), found in Schizosaccharomyces pombe (strain 972 / ATCC 24843) (Fission yeast).